Consider the following 1105-residue polypeptide: Ran-binding protein 6 (1105 aa).

The residue at position 2 (Ala2) is an N-acetylalanine. HEAT repeat units follow at residues 219–257 (FKDFADLLPGILQAVNDSCYQDDDSVLESLVEIADTVPK), 361–399 (KVVLPMTKEHIMQMLQSPDWKCRHAGLMALSAIGEGCHQ), 402–440 (EPILDETVNSVLLFLQDPHPRVRAAACTTLGQMATDFAP), 444–483 (KKFHEIVITALLRTMENQGNQRVQSHAASALVIFIEDCPK), 866–905 (LPWFEQLLPLIVNLICSSRPWPDRQWGLCIFDDIIEHCSP), 908–946 (FKYVEYFRWPMLLNMRDNNPEVRQAAAYGLGVMAQFGGD), and 949–987 (RSLCSEAVPLLVKVIKCANSKTKKNVIATENCISAIGKI).

Belongs to the importin beta family.

The protein resides in the cytoplasm. Its subcellular location is the nucleus. May function in nuclear protein import as nuclear transport receptor. The protein is Ran-binding protein 6 (Ranbp6) of Mus musculus (Mouse).